Reading from the N-terminus, the 160-residue chain is NADH-quinone oxidoreductase subunit B (160 aa).

[4Fe-4S] cluster is bound by residues Cys39, Cys40, Cys104, and Cys135.

It belongs to the complex I 20 kDa subunit family. As to quaternary structure, NDH-1 is composed of 14 different subunits. Subunits NuoB, C, D, E, F, and G constitute the peripheral sector of the complex. [4Fe-4S] cluster serves as cofactor.

It localises to the cell membrane. It carries out the reaction a quinone + NADH + 5 H(+)(in) = a quinol + NAD(+) + 4 H(+)(out). NDH-1 shuttles electrons from NADH, via FMN and iron-sulfur (Fe-S) centers, to quinones in the respiratory chain. The immediate electron acceptor for the enzyme in this species is believed to be a menaquinone. Couples the redox reaction to proton translocation (for every two electrons transferred, four hydrogen ions are translocated across the cytoplasmic membrane), and thus conserves the redox energy in a proton gradient. The chain is NADH-quinone oxidoreductase subunit B from Amoebophilus asiaticus (strain 5a2).